A 147-amino-acid chain; its full sequence is Peptide deformylase (147 aa).

Fe cation is bound by residues Cys88 and His130. The active site involves Glu131. His134 contributes to the Fe cation binding site.

It belongs to the polypeptide deformylase family. Requires Fe(2+) as cofactor.

It carries out the reaction N-terminal N-formyl-L-methionyl-[peptide] + H2O = N-terminal L-methionyl-[peptide] + formate. Its function is as follows. Removes the formyl group from the N-terminal Met of newly synthesized proteins. Requires at least a dipeptide for an efficient rate of reaction. N-terminal L-methionine is a prerequisite for activity but the enzyme has broad specificity at other positions. The chain is Peptide deformylase from Alkaliphilus metalliredigens (strain QYMF).